We begin with the raw amino-acid sequence, 1838 residues long: Type III effector DspE (1838 aa).

The span at 1–12 shows a compositional bias: basic and acidic residues; sequence MELKSLGTEHKA. Disordered regions lie at residues 1-72, 86-163, 182-264, 281-300, 398-418, and 1480-1505; these read MELK…AAHQ, KKFS…PTQQ, MAHP…VATP, LEGT…LKGS, DGKS…KTML, and NLAA…SNNR. Over residues 27-46 the composition is skewed to low complexity; the sequence is ALQQGSSSSSPQNAAASLAA. Positions 91 to 103 are enriched in polar residues; sequence SAPQGQPGTTHSK. A compositionally biased stretch (basic and acidic residues) spans 110–120; the sequence is LLARDDGETQH. The segment covering 407–418 has biased composition (polar residues); sequence GSGTQSHNKTML. Residues 1480–1502 show a composition bias toward low complexity; the sequence is NLAAGSRERSTTSGQFGSTTSAS.

The protein belongs to the AvrE family. Interacts with the chaperone DspF (DspB/F).

Its subcellular location is the secreted. The protein resides in the host cell. With respect to regulation, polyamidoamine dendrimers inhibit channel and virulence activities. In terms of biological role, major virulence factor that may function as a water- and solute-permeable channel dedicated to creating osmotic/water potential perturbation and a water- and nutrient-rich apoplast in which bacteria multiply within the infected plant tissues. Expression in Xenopus oocytes results in inward and outward currents, permeability to water and osmolarity-dependent oocyte swelling and bursting. Acts as a major cell-death inducer during fire blight, a necrotic disease affecting plants of the rosaceous family, and during hypersensitive response (HR) on non-host plants. Essential for pathogenicity on host plants. Contributes quantitatively and in a strain-dependent fashion to HR elicitation in non-host plants such as tobacco. Induces cell death in leaves of apple, a host plant, and tobacco, a non-host plant. Also triggers necrosis in the widely used model, non-host, N.benthamiana and in yeast. Required for the transient multiplication and survival of E.amylovora in non-host A.thaliana leaves. In A.thaliana, triggers electrolyte leakage, activation of defense pathways, reactive oxygen species (ROS) accumulation and cell death. The toxicity of DspE in A.thaliana is associated with an early repression of de novo protein synthesis. This Erwinia amylovora (Fire blight bacteria) protein is Type III effector DspE.